Reading from the N-terminus, the 778-residue chain is 5-methyltetrahydropteroyltriglutamate--homocysteine methyltransferase (778 aa).

5-methyltetrahydropteroyltri-L-glutamate-binding positions include 17–20 and K118; that span reads RELK. L-homocysteine is bound by residues 436-438 and E489; that span reads IGS. L-methionine is bound by residues 436–438 and E489; that span reads IGS. 5-methyltetrahydropteroyltri-L-glutamate contacts are provided by residues 520–521 and W566; that span reads RC. D604 is a binding site for L-homocysteine. D604 lines the L-methionine pocket. E610 lines the 5-methyltetrahydropteroyltri-L-glutamate pocket. Zn(2+)-binding residues include H646, C648, and E670. The active-site Proton donor is H699. C731 is a binding site for Zn(2+).

Belongs to the vitamin-B12 independent methionine synthase family. It depends on Zn(2+) as a cofactor.

It carries out the reaction 5-methyltetrahydropteroyltri-L-glutamate + L-homocysteine = tetrahydropteroyltri-L-glutamate + L-methionine. It participates in amino-acid biosynthesis; L-methionine biosynthesis via de novo pathway; L-methionine from L-homocysteine (MetE route): step 1/1. Catalyzes the transfer of a methyl group from 5-methyltetrahydrofolate to homocysteine resulting in methionine formation. The sequence is that of 5-methyltetrahydropteroyltriglutamate--homocysteine methyltransferase from Vibrio vulnificus (strain CMCP6).